Consider the following 429-residue polypeptide: Adenylosuccinate synthetase (429 aa).

GTP-binding positions include 13–19 (GDEGKGK) and 41–43 (GHT). The active-site Proton acceptor is the Asp14. The Mg(2+) site is built by Asp14 and Gly41. Residues 14–17 (DEGK), 39–42 (NAGH), Thr130, Arg144, Gln225, Thr240, and Arg304 contribute to the IMP site. His42 functions as the Proton donor in the catalytic mechanism. 300-306 (ATTGRAR) is a binding site for substrate. GTP is bound by residues Arg306, 332–334 (KLD), and 413–415 (STG).

The protein belongs to the adenylosuccinate synthetase family. As to quaternary structure, homodimer. Mg(2+) serves as cofactor.

Its subcellular location is the cytoplasm. It carries out the reaction IMP + L-aspartate + GTP = N(6)-(1,2-dicarboxyethyl)-AMP + GDP + phosphate + 2 H(+). Its pathway is purine metabolism; AMP biosynthesis via de novo pathway; AMP from IMP: step 1/2. Functionally, plays an important role in the de novo pathway of purine nucleotide biosynthesis. Catalyzes the first committed step in the biosynthesis of AMP from IMP. The protein is Adenylosuccinate synthetase of Pseudomonas fluorescens (strain SBW25).